The following is a 90-amino-acid chain: Small ribosomal subunit protein uS15 (90 aa).

Belongs to the universal ribosomal protein uS15 family. As to quaternary structure, part of the 30S ribosomal subunit. Forms a bridge to the 50S subunit in the 70S ribosome, contacting the 23S rRNA.

In terms of biological role, one of the primary rRNA binding proteins, it binds directly to 16S rRNA where it helps nucleate assembly of the platform of the 30S subunit by binding and bridging several RNA helices of the 16S rRNA. Its function is as follows. Forms an intersubunit bridge (bridge B4) with the 23S rRNA of the 50S subunit in the ribosome. The polypeptide is Small ribosomal subunit protein uS15 (Wolbachia sp. subsp. Brugia malayi (strain TRS)).